A 239-amino-acid chain; its full sequence is Phosphoglycolate phosphatase (239 aa).

The active-site Nucleophile is the Asp-9. Residues Asp-9 and Asp-11 each coordinate Mg(2+). Position 157 (Lys-157) interacts with substrate. Residues Asp-180 and Asp-184 each contribute to the Mg(2+) site.

Belongs to the archaeal SPP-like hydrolase family. Mg(2+) is required as a cofactor.

The enzyme catalyses 2-phosphoglycolate + H2O = glycolate + phosphate. Its function is as follows. Catalyzes the dephosphorylation of 2-phosphoglycolate. The chain is Phosphoglycolate phosphatase from Thermococcus kodakarensis (strain ATCC BAA-918 / JCM 12380 / KOD1) (Pyrococcus kodakaraensis (strain KOD1)).